The chain runs to 310 residues: D-erythrulose 1-phosphate 3-epimerase (310 aa).

The enzyme catalyses D-erythrulose 1-phosphate = L-erythrulose 1-phosphate. The protein operates within carbohydrate metabolism; erythritol degradation. Functionally, catalyzes the racemization of D-erythrulose 1-phosphate to L-erythrulose 1-phosphate. The polypeptide is D-erythrulose 1-phosphate 3-epimerase (Brucella abortus (strain 2308)).